We begin with the raw amino-acid sequence, 291 residues long: 4-diphosphocytidyl-2-C-methyl-D-erythritol kinase (291 aa).

Residue Lys-8 is part of the active site. Residue 89-99 (PIGSGIGGGSS) coordinates ATP. Asp-131 is a catalytic residue.

This sequence belongs to the GHMP kinase family. IspE subfamily.

It carries out the reaction 4-CDP-2-C-methyl-D-erythritol + ATP = 4-CDP-2-C-methyl-D-erythritol 2-phosphate + ADP + H(+). Its pathway is isoprenoid biosynthesis; isopentenyl diphosphate biosynthesis via DXP pathway; isopentenyl diphosphate from 1-deoxy-D-xylulose 5-phosphate: step 3/6. Catalyzes the phosphorylation of the position 2 hydroxy group of 4-diphosphocytidyl-2C-methyl-D-erythritol. The sequence is that of 4-diphosphocytidyl-2-C-methyl-D-erythritol kinase from Chlamydia abortus (strain DSM 27085 / S26/3) (Chlamydophila abortus).